Reading from the N-terminus, the 79-residue chain is MSAHKVQIGLSSGQFRVALQVPSVRLKGLGSFHTGSIVLPSQGSLREDQISLHNQDGLHKVMREVLGYERNSYKKFFLR.

The propeptide at 1 to 56 is removed in mature form; that stretch reads MSAHKVQIGLSSGQFRVALQVPSVRLKGLGSFHTGSIVLPSQGSLREDQISLHNQD.

Functionally, has antifungal activity against C.albicans. Has antibacterial activity against the Gram-positive bacterium S.aureus and the Gram-negative bacterium E.coli. Lacks hemolytic activity against rabbit erythrocytes. This chain is Ixosin, found in Ixodes sinensis (Hard tick).